The sequence spans 165 residues: uncharacterized protein (165 aa).

Residues 53–123 (CSEKTGSAPN…PAPSSGRQGG (71 aa)) form a disordered region. Low complexity predominate over residues 58–71 (GSAPNPGSSAPAPA).

This is an uncharacterized protein from Treponema pallidum (strain Nichols).